The sequence spans 511 residues: E3 ubiquitin-protein ligase TRIM7 (511 aa).

An RING-type zinc finger spans residues 29–82; the sequence is CSICLELFREPVSVECGHSFCRACIGRCWERPGAGSVGAATRAPPFPLPCPQCR. A Phosphoserine; by RPS6KA5 modification is found at Ser107. The B box-type zinc-finger motif lies at 125–166; it reads AAAARCGQHGEPFKLYCQDDGRAICVVCDRAREHREHAVLPL. Positions 130, 133, 152, and 158 each coordinate Zn(2+). A coiled-coil region spans residues 166–263; it reads LDEAVQEAKE…AQLGVEITQL (98 aa). A B30.2/SPRY domain is found at 324-511; the sequence is MLKKFKEDLR…STGTYLRIWP (188 aa).

The protein belongs to the TRIM/RBCC family. Forms homodimers. Interacts with GNIP2. Interacts with GYG1. Interacts with RNF187 (via C-terminus). In terms of processing, phosphorylated at Ser-107 by RPS6KA5/MSK1, which stimulates the ubiquitin ligase activity. Post-translationally, auto-ubiquitinates via 'Lys-63'-linked polyubiquitination. In terms of tissue distribution, skeletal muscle and placenta, at lower levels in heart, brain and pancreas. Isoform 1 is widely expressed with high level in testis, kidney and heart.

It localises to the nucleus. The protein localises to the cytoplasm. It is found in the golgi apparatus. It carries out the reaction S-ubiquitinyl-[E2 ubiquitin-conjugating enzyme]-L-cysteine + [acceptor protein]-L-lysine = [E2 ubiquitin-conjugating enzyme]-L-cysteine + N(6)-ubiquitinyl-[acceptor protein]-L-lysine.. It participates in protein modification; protein ubiquitination. Its function is as follows. E3 ubiquitin-protein ligase that have both tumor-promoting and tumor-suppressing activities and functions in several biological processes including innate immunity, regulation of ferroptosis as well as cell proliferation and migration. Acts as an antiviral effector against multiple viruses by targeting specific viral proteins for ubiquitination and degradation including norovirus NTPase protein or SARS-CoV-2 NSP5 and NSP8 proteins. Mechanistically, recognizes the C-terminal glutamine-containing motif usually generated by viral proteases that process the polyproteins and trigger their ubiquitination and subsequent degradation. Mediates 'Lys-63'-linked polyubiquitination and stabilization of the JUN coactivator RNF187 in response to growth factor signaling via the MEK/ERK pathway, thereby regulating JUN transactivation and cellular proliferation. Promotes the TLR4-mediated signaling activation through its E3 ligase domain leading to production of pro-inflammatory cytokines and type I interferon. Also plays a negative role in the regulation of exogenous cytosolic DNA virus-triggered immune response. Mechanistically, enhances the 'Lys-48'-linked ubiquitination of STING1 leading to its proteasome-dependent degradation. Mediates the ubiquitination of the SIN3-HDAC chromatin remodeling complex component BRMS1. Modulates NCOA4-mediated ferritinophagy and ferroptosis in glioblastoma cells by ubiquitinating NCOA4, leading to its degradation. (Microbial infection) Promotes Zika virus replication by mediating envelope protein E ubiquitination. In Homo sapiens (Human), this protein is E3 ubiquitin-protein ligase TRIM7 (TRIM7).